Consider the following 339-residue polypeptide: DNA-directed RNA polymerase subunit alpha (339 aa).

An alpha N-terminal domain (alpha-NTD) region spans residues 1 to 233; it reads MVREEVAGST…DLFLPFLHAE (233 aa). Residues 264-339 are alpha C-terminal domain (alpha-CTD); the sequence is KKGIPLNCIF…IDLLKNKLSF (76 aa).

The protein belongs to the RNA polymerase alpha chain family. In terms of assembly, in plastids the minimal PEP RNA polymerase catalytic core is composed of four subunits: alpha, beta, beta', and beta''. When a (nuclear-encoded) sigma factor is associated with the core the holoenzyme is formed, which can initiate transcription.

The protein resides in the plastid. It localises to the chloroplast. The enzyme catalyses RNA(n) + a ribonucleoside 5'-triphosphate = RNA(n+1) + diphosphate. Functionally, DNA-dependent RNA polymerase catalyzes the transcription of DNA into RNA using the four ribonucleoside triphosphates as substrates. This Aegilops uniaristata (Goatgrass) protein is DNA-directed RNA polymerase subunit alpha.